A 328-amino-acid polypeptide reads, in one-letter code: uncharacterized protein (328 aa).

An N-terminal signal peptide occupies residues 1-32 (MFNFRLFSRRGKSLGLLAIVLLLFGFYSLKSS).

The protein belongs to the glycosyltransferase 34 family.

It localises to the endoplasmic reticulum. This is an uncharacterized protein from Schizosaccharomyces pombe (strain 972 / ATCC 24843) (Fission yeast).